The sequence spans 284 residues: Bifunctional protein FolD (284 aa).

Residue 166 to 168 participates in NADP(+) binding; the sequence is GAS.

This sequence belongs to the tetrahydrofolate dehydrogenase/cyclohydrolase family. Homodimer.

It catalyses the reaction (6R)-5,10-methylene-5,6,7,8-tetrahydrofolate + NADP(+) = (6R)-5,10-methenyltetrahydrofolate + NADPH. The enzyme catalyses (6R)-5,10-methenyltetrahydrofolate + H2O = (6R)-10-formyltetrahydrofolate + H(+). It participates in one-carbon metabolism; tetrahydrofolate interconversion. Catalyzes the oxidation of 5,10-methylenetetrahydrofolate to 5,10-methenyltetrahydrofolate and then the hydrolysis of 5,10-methenyltetrahydrofolate to 10-formyltetrahydrofolate. The sequence is that of Bifunctional protein FolD from Nitrosococcus oceani (strain ATCC 19707 / BCRC 17464 / JCM 30415 / NCIMB 11848 / C-107).